We begin with the raw amino-acid sequence, 551 residues long: Glucose-6-phosphate isomerase (551 aa).

Glutamate 349 (proton donor) is an active-site residue. Active-site residues include histidine 378 and lysine 480.

This sequence belongs to the GPI family.

It is found in the cytoplasm. It catalyses the reaction alpha-D-glucose 6-phosphate = beta-D-fructose 6-phosphate. The protein operates within carbohydrate biosynthesis; gluconeogenesis. It functions in the pathway carbohydrate degradation; glycolysis; D-glyceraldehyde 3-phosphate and glycerone phosphate from D-glucose: step 2/4. In terms of biological role, catalyzes the reversible isomerization of glucose-6-phosphate to fructose-6-phosphate. This is Glucose-6-phosphate isomerase from Prochlorococcus marinus (strain MIT 9313).